The sequence spans 454 residues: tRNA modification GTPase MnmE (454 aa).

Arginine 23, glutamate 80, and lysine 120 together coordinate (6S)-5-formyl-5,6,7,8-tetrahydrofolate. Positions 216-377 constitute a TrmE-type G domain; that stretch reads GMKVVIAGRP…LRNHLKQSMG (162 aa). Asparagine 226 is a binding site for K(+). GTP-binding positions include 226–231, 245–251, 270–273, 335–338, and 358–360; these read NAGKSS, TDIAGTT, DTAG, NKAD, and SAR. A Mg(2+)-binding site is contributed by serine 230. Positions 245, 247, and 250 each coordinate K(+). A Mg(2+)-binding site is contributed by threonine 251. Lysine 454 lines the (6S)-5-formyl-5,6,7,8-tetrahydrofolate pocket.

This sequence belongs to the TRAFAC class TrmE-Era-EngA-EngB-Septin-like GTPase superfamily. TrmE GTPase family. As to quaternary structure, homodimer. Heterotetramer of two MnmE and two MnmG subunits. The cofactor is K(+).

It is found in the cytoplasm. Exhibits a very high intrinsic GTPase hydrolysis rate. Involved in the addition of a carboxymethylaminomethyl (cmnm) group at the wobble position (U34) of certain tRNAs, forming tRNA-cmnm(5)s(2)U34. In Salmonella typhi, this protein is tRNA modification GTPase MnmE.